Reading from the N-terminus, the 517-residue chain is Nicotine N-demethylase CYP82E4 (517 aa).

Residues 2–22 (VFPIEAIVGLVTFTFLFFFLW) form a helical membrane-spanning segment. Lysine 254 participates in a covalent cross-link: Glycyl lysine isopeptide (Lys-Gly) (interchain with G-Cter in ubiquitin). Cysteine 457 contributes to the heme binding site.

This sequence belongs to the cytochrome P450 family. CYP82E2 subfamily. Heme serves as cofactor. In terms of tissue distribution, expressed at low levels in green leaves.

The protein localises to the membrane. The enzyme catalyses (S)-nicotine + reduced [NADPH--hemoprotein reductase] + O2 = (S)-nornicotine + formaldehyde + oxidized [NADPH--hemoprotein reductase] + H2O + H(+). Its pathway is alkaloid biosynthesis; nicotine biosynthesis. Functionally, involved in the biosynthesis of pyridine alkaloid natural products, leading mainly to the production of anabasine, anatabine, nicotine and nornicotine, effective deterrents against herbivores with antiparasitic and pesticide properties (neurotoxins); nornicotine serves as the precursor in the synthesis of the carcinogen compound N'-nitrosonornicotine (NNN). Catalyzes the demethylation of nicotine to form nornicotine. The polypeptide is Nicotine N-demethylase CYP82E4 (Nicotiana tabacum (Common tobacco)).